A 541-amino-acid polypeptide reads, in one-letter code: Protein yellow (541 aa).

Residues 1 to 21 form the signal peptide; sequence MFQDKGWVLLTLITLVSPSWA. A glycan (N-linked (GlcNAc...) asparagine) is linked at Asn-144.

This sequence belongs to the major royal jelly protein family.

Its subcellular location is the secreted. Its function is as follows. Controls the pigmentation pattern of the adult cuticle and larval mouth parts. This Drosophila yakuba (Fruit fly) protein is Protein yellow (y).